The primary structure comprises 448 residues: Ribosomal protein uS12 methylthiotransferase RimO (448 aa).

The 111-residue stretch at 16–126 (PRISFVSLGC…VVAAVHEAVP (111 aa)) folds into the MTTase N-terminal domain. Residues C25, C61, C90, C157, C161, and C164 each contribute to the [4Fe-4S] cluster site. The 238-residue stretch at 143-380 (LTPRHYAYLK…MEAQAGVSLK (238 aa)) folds into the Radical SAM core domain. The TRAM domain maps to 383 to 448 (RAKVGKRLQV…DAYDLHGIAV (66 aa)).

It belongs to the methylthiotransferase family. RimO subfamily. It depends on [4Fe-4S] cluster as a cofactor.

The protein resides in the cytoplasm. The catalysed reaction is L-aspartate(89)-[ribosomal protein uS12]-hydrogen + (sulfur carrier)-SH + AH2 + 2 S-adenosyl-L-methionine = 3-methylsulfanyl-L-aspartate(89)-[ribosomal protein uS12]-hydrogen + (sulfur carrier)-H + 5'-deoxyadenosine + L-methionine + A + S-adenosyl-L-homocysteine + 2 H(+). Catalyzes the methylthiolation of an aspartic acid residue of ribosomal protein uS12. In Methylorubrum populi (strain ATCC BAA-705 / NCIMB 13946 / BJ001) (Methylobacterium populi), this protein is Ribosomal protein uS12 methylthiotransferase RimO.